The sequence spans 430 residues: Maintenance of mitochondrial morphology protein 1 (430 aa).

Topologically, residues 1–82 (MTEIDPNINE…ISNTWNFTQG (82 aa)) are lumenal. A helical transmembrane segment spans residues 83–103 (LVVGQLSVIFLIIIFVKFFVF). Over 104–430 (ADSSSSIPSK…AKPKDSDDTL (327 aa)) the chain is Cytoplasmic. Basic and acidic residues-rich tracts occupy residues 126 to 138 (RDNKSTTSRDRHN) and 335 to 346 (ENGKGSSSEDKK). Disordered stretches follow at residues 126–154 (RDNKSTTSRDRHNGIGGKDSNLEPSTDDE) and 315–346 (QADQVARPSNGHTSTDNGNDENGKGSSSEDKK). The 231-residue stretch at 178–408 (ASESLDWFNV…EPRFQVVKLP (231 aa)) folds into the SMP-LTD domain.

It belongs to the MMM1 family. Homodimer. Component of the ER-mitochondria encounter structure (ERMES) or MDM complex, composed of MMM1, MDM10, MDM12 and MDM34. An MMM1 homodimer associates with one molecule of MDM12 on each side in a pairwise head-to-tail manner, and the SMP-LTD domains of MMM1 and MDM12 generate a continuous hydrophobic tunnel for phospholipid trafficking.

Its subcellular location is the endoplasmic reticulum membrane. Component of the ERMES/MDM complex, which serves as a molecular tether to connect the endoplasmic reticulum (ER) and mitochondria. Components of this complex are involved in the control of mitochondrial shape and protein biogenesis, and function in nonvesicular lipid trafficking between the ER and mitochondria. The MDM12-MMM1 subcomplex functions in the major beta-barrel assembly pathway that is responsible for biogenesis of all outer membrane beta-barrel proteins, and acts in a late step after the SAM complex. The MDM10-MDM12-MMM1 subcomplex further acts in the TOM40-specific pathway after the action of the MDM12-MMM1 complex. Essential for establishing and maintaining the structure of mitochondria and maintenance of mtDNA nucleoids. In Lodderomyces elongisporus (strain ATCC 11503 / CBS 2605 / JCM 1781 / NBRC 1676 / NRRL YB-4239) (Yeast), this protein is Maintenance of mitochondrial morphology protein 1.